Here is a 363-residue protein sequence, read N- to C-terminus: Cinnamyl alcohol dehydrogenase 2 (363 aa).

Residue cysteine 47 coordinates Zn(2+). Residue threonine 49 participates in NADP(+) binding. Residues histidine 69, glutamate 70, cysteine 100, cysteine 103, cysteine 106, cysteine 114, and cysteine 163 each coordinate Zn(2+). NADP(+) is bound by residues threonine 167, 188–193 (GLGGVG), 211–216 (SSSARK), threonine 251, glycine 275, and 298–300 (SFI).

This sequence belongs to the zinc-containing alcohol dehydrogenase family. As to quaternary structure, homodimer. It depends on Zn(2+) as a cofactor. Expressed in roots behind the root tips in the pericycle region and layer of cortical cells adjacent to the exodermis. Expressed in vascular bundles and lateral veins of leaf sheaths and blades. Expressed in the vicinity of vascular bundles in the first internode below the inflorescence. Highly expressed in the culm.

It carries out the reaction (E)-cinnamyl alcohol + NADP(+) = (E)-cinnamaldehyde + NADPH + H(+). The enzyme catalyses (E)-coniferol + NADP(+) = (E)-coniferaldehyde + NADPH + H(+). The catalysed reaction is (E)-sinapyl alcohol + NADP(+) = (E)-sinapaldehyde + NADPH + H(+). It catalyses the reaction (E)-4-coumaroyl alcohol + NADP(+) = (E)-4-coumaraldehyde + NADPH + H(+). It carries out the reaction (E)-caffeyl alcohol + NADP(+) = (E)-caffeyl aldehyde + NADPH + H(+). Its pathway is aromatic compound metabolism; phenylpropanoid biosynthesis. Its function is as follows. Involved in lignin biosynthesis. Catalyzes the final step specific for the production of lignin monomers. Catalyzes the NADPH-dependent reduction of coniferaldehyde and sinapaldehyde to their respective alcohols. Plays the major role in monolignol biosynthesis. Functions cooperatively with COMT in the culm internodes for the biosynthesis of monolignols, the lignin precursors. May be involved in lignin biosynthesis in leaves and roots. The protein is Cinnamyl alcohol dehydrogenase 2 of Oryza sativa subsp. japonica (Rice).